The chain runs to 142 residues: 3-hydroxyacyl-[acyl-carrier-protein] dehydratase FabZ (142 aa).

Histidine 50 is a catalytic residue.

It belongs to the thioester dehydratase family. FabZ subfamily.

The protein resides in the cytoplasm. It catalyses the reaction a (3R)-hydroxyacyl-[ACP] = a (2E)-enoyl-[ACP] + H2O. Involved in unsaturated fatty acids biosynthesis. Catalyzes the dehydration of short chain beta-hydroxyacyl-ACPs and long chain saturated and unsaturated beta-hydroxyacyl-ACPs. This Clostridium tetani (strain Massachusetts / E88) protein is 3-hydroxyacyl-[acyl-carrier-protein] dehydratase FabZ.